We begin with the raw amino-acid sequence, 633 residues long: MESKTYYLLRTEEYGDYEMFTIVEDKYFFDHIHRSDKITQVKPDYDRFGFKICEDEQTYLTNYIIELETLSLFDIDTVDRLIASTENKLGIYGHLYCLYIKNNRLDLCDYLIQSNYEYDPTSNCDDILEFVPDENEADVLMYIINNNNFFKIKWSEIATHVIGYTECYDVIDYLVNFLKQIDCNIDYDTIIEECYYSRDGYSDDTFFNETIKILLRLECVNVNKLLEIACIFSITEIVTHLLDIGTEYDFNTILKSHISLHILKIFLNRGNILDSDSVKILLSTNKGWKFSQTFSYLMDEQYITQELVDKNLVDIVIDNNFPVLKRLIEKFDLSELIDYDVVMKKAIMNSSLDIIDYCISNGTDVNNYMTYAFQHYNQSCFTHLLNQGGTLSTDNLVYRPENLRESKYQNVQYIDIVIDNNLDSIENILDNVLEYYHYNTDICNYVLNKINYNSIVLPKLTNKIIRNYYYNECINDKYIDLVKSKINPNDIDKSIIAIVTDDFDSAKQLIMENNLYDNLKILFVAIMKYDIDMLKFLFEINDNSNDYLQWTLLFSLVGNCKSVKFIMEDIGVKPERMKEFRFIMKKSRDTCTKYFKLNGYDVSIDNEDNCDEYPVVKFFKEMGIYLGDYIYTL.

ANK repeat units lie at residues 91–120 (IYGH…EYDP), 123–152 (NCDD…FFKI), 221–250 (NVNK…EYDF), 252–275 (TILK…ILDS), 338–367 (DYDV…DVNN), 369–393 (MTYA…TLST), and 517–546 (DNLK…NSND).

The chain is Putative ankyrin repeat protein L774 from Acanthamoeba polyphaga mimivirus (APMV).